Reading from the N-terminus, the 161-residue chain is Large ribosomal subunit protein uL11 (161 aa).

This sequence belongs to the universal ribosomal protein uL11 family. Part of the ribosomal stalk of the 50S ribosomal subunit. Interacts with L10 and the large rRNA to form the base of the stalk. L10 forms an elongated spine to which L12 dimers bind in a sequential fashion forming a multimeric L10(L12)X complex.

In terms of biological role, forms part of the ribosomal stalk which helps the ribosome interact with GTP-bound translation factors. The polypeptide is Large ribosomal subunit protein uL11 (Methanococcoides burtonii (strain DSM 6242 / NBRC 107633 / OCM 468 / ACE-M)).